Reading from the N-terminus, the 727-residue chain is Protein TITANIA (727 aa).

A disordered region spans residues methionine 1–alanine 136. The segment covering glycine 14–proline 25 has biased composition (pro residues). Over residues aspartate 67–proline 88 the composition is skewed to basic and acidic residues. Low complexity predominate over residues aspartate 104 to proline 117. The segment at alanine 406–serine 470 adopts a PHD-type zinc-finger fold. Positions valine 629 to serine 697 form a coiled coil.

In terms of tissue distribution, widely expressed.

The protein localises to the nucleus. Probable transcription factor that functions as a regulator of metal transporter genes responsible for essential metals delivery to shoots and normal plant growth. Required for the maintenance of metal transporter gene expression, such as IRT1, IRT2, ZIP1, ZIP9, NRAMP1 and NRAMP5. The protein is Protein TITANIA of Oryza sativa subsp. japonica (Rice).